Reading from the N-terminus, the 414-residue chain is Putative transporter AmpG 4 (414 aa).

12 consecutive transmembrane segments (helical) span residues 15–35, 44–63, 84–104, 109–129, 150–170, 177–197, 230–250, 268–288, 295–315, 324–344, 360–379, and 389–409; these read IFIL…TLSV, IAVI…KVFW, WLIL…KENP, TSLY…DIAV, VFGY…LAEI, LTFV…ITVN, FAVT…MLGA, IIAK…GGIV, FKGL…FIWL, ALLI…TALV, YALL…IYAG, and GFFI…MYLN.

The protein belongs to the major facilitator superfamily.

The protein localises to the cell inner membrane. The protein is Putative transporter AmpG 4 (ampG4) of Rickettsia felis (strain ATCC VR-1525 / URRWXCal2) (Rickettsia azadi).